We begin with the raw amino-acid sequence, 115 residues long: Large ribosomal subunit protein uL18 (115 aa).

It belongs to the universal ribosomal protein uL18 family. In terms of assembly, part of the 50S ribosomal subunit; part of the 5S rRNA/L5/L18/L25 subcomplex. Contacts the 5S and 23S rRNAs.

In terms of biological role, this is one of the proteins that bind and probably mediate the attachment of the 5S RNA into the large ribosomal subunit, where it forms part of the central protuberance. The polypeptide is Large ribosomal subunit protein uL18 (Mycoplasma genitalium (strain ATCC 33530 / DSM 19775 / NCTC 10195 / G37) (Mycoplasmoides genitalium)).